The primary structure comprises 295 residues: 3-hydroxy-5-phosphonooxypentane-2,4-dione thiolase (295 aa).

The active-site Schiff-base intermediate with substrate is the Lys-203.

Belongs to the DeoC/FbaB aldolase family. In terms of assembly, homodecamer.

Its subcellular location is the cytoplasm. It carries out the reaction dihydroxyacetone phosphate + acetyl-CoA = 3-hydroxy-2,4-dioxopentyl phosphate + CoA. Its function is as follows. Involved in the degradation of phospho-AI-2, thereby terminating induction of the lsr operon and closing the AI-2 signaling cycle. Catalyzes the transfer of an acetyl moiety from 3-hydroxy-5-phosphonooxypentane-2,4-dione to CoA to form glycerone phosphate and acetyl-CoA. The polypeptide is 3-hydroxy-5-phosphonooxypentane-2,4-dione thiolase (Klebsiella pneumoniae subsp. pneumoniae (strain ATCC 700721 / MGH 78578)).